The following is a 187-amino-acid chain: Peptide deformylase (187 aa).

Fe cation is bound by residues cysteine 107 and histidine 149. Residue glutamate 150 is part of the active site. Histidine 153 contributes to the Fe cation binding site.

Belongs to the polypeptide deformylase family. Requires Fe(2+) as cofactor.

The catalysed reaction is N-terminal N-formyl-L-methionyl-[peptide] + H2O = N-terminal L-methionyl-[peptide] + formate. Functionally, removes the formyl group from the N-terminal Met of newly synthesized proteins. Requires at least a dipeptide for an efficient rate of reaction. N-terminal L-methionine is a prerequisite for activity but the enzyme has broad specificity at other positions. The protein is Peptide deformylase of Microchaete diplosiphon (Fremyella diplosiphon).